The following is a 237-amino-acid chain: Uridylate kinase (237 aa).

Position 12-15 (12-15) interacts with ATP; sequence KLSG. The involved in allosteric activation by GTP stretch occupies residues 20-25; the sequence is GENGYG. Glycine 54 serves as a coordination point for UMP. ATP is bound by residues glycine 55 and arginine 59. Residues aspartate 72 and 133–140 contribute to the UMP site; that span reads TGNPYFST. Residues tyrosine 166 and aspartate 169 each coordinate ATP.

This sequence belongs to the UMP kinase family. Homohexamer.

It is found in the cytoplasm. It carries out the reaction UMP + ATP = UDP + ADP. Its pathway is pyrimidine metabolism; CTP biosynthesis via de novo pathway; UDP from UMP (UMPK route): step 1/1. Allosterically activated by GTP. Inhibited by UTP. Catalyzes the reversible phosphorylation of UMP to UDP. The protein is Uridylate kinase of Clostridium tetani (strain Massachusetts / E88).